The primary structure comprises 397 residues: Putative F-box protein At1g26510 (397 aa).

The disordered stretch occupies residues 1-23 (MRTRSKKTKTVNNNNDLQKSEEK). Residues 24-71 (QKFDQLPLDLEIEMFRRLPLKSVARFLTLSKSCATTIRSPSFITSFPS) form the F-box domain.

The polypeptide is Putative F-box protein At1g26510 (Arabidopsis thaliana (Mouse-ear cress)).